Consider the following 200-residue polypeptide: Lipopolysaccharide core heptose(II)-phosphate phosphatase (200 aa).

The N-terminal stretch at 1-25 (MLAFCRSSLKSKKYFIILLALAAIA) is a signal peptide.

This sequence belongs to the phosphoglycerate mutase family. Ais subfamily.

The protein localises to the periplasm. The protein operates within bacterial outer membrane biogenesis; lipopolysaccharide metabolism. In terms of biological role, catalyzes the dephosphorylation of heptose(II) of the outer membrane lipopolysaccharide core. This Escherichia coli O157:H7 protein is Lipopolysaccharide core heptose(II)-phosphate phosphatase.